We begin with the raw amino-acid sequence, 982 residues long: Mitochondrial DNA mismatch repair protein mutS homolog (982 aa).

698-705 is an ATP binding site; it reads SVNGAGKS. Positions 905-951 constitute an HNH domain; that stretch reads CEICGAPADAVHHIKPKSEHKKLCNRKLNRRSNLVPVCSSCHLDIHR.

The protein belongs to the DNA mismatch repair MutS family.

The protein resides in the mitochondrion. Functionally, may be involved in DNA-mismatch repair. In Sarcophyton glaucum (Toadstool umbrella leather coral), this protein is Mitochondrial DNA mismatch repair protein mutS homolog.